The chain runs to 95 residues: Cell division topological specificity factor (95 aa).

It belongs to the MinE family.

Functionally, prevents the cell division inhibition by proteins MinC and MinD at internal division sites while permitting inhibition at polar sites. This ensures cell division at the proper site by restricting the formation of a division septum at the midpoint of the long axis of the cell. The sequence is that of Cell division topological specificity factor from Synechococcus sp. (strain CC9902).